Reading from the N-terminus, the 820-residue chain is Inhibitor of nuclear factor kappa-B kinase epsilon subunit homolog 1 (820 aa).

Positions 21 to 299 constitute a Protein kinase domain; it reads LFNDESIGKG…TDIFEFQPVT (279 aa). Residues 27 to 35 and Lys-49 each bind ATP; that span reads IGKGAYSEV. The active-site Proton acceptor is Asp-149. The segment at 758–798 is disordered; that stretch reads SPNKEQFPKPEQDSILESSIDEGSTSFESTPPSSPPDVGSN.

It belongs to the protein kinase superfamily. Ser/Thr protein kinase family. Interacts with allo-1 (via N-terminus); the interaction is direct. As to expression, expressed in oocytes.

Its subcellular location is the cytoplasm. The enzyme catalyses L-seryl-[protein] + ATP = O-phospho-L-seryl-[protein] + ADP + H(+). The catalysed reaction is L-threonyl-[protein] + ATP = O-phospho-L-threonyl-[protein] + ADP + H(+). In terms of biological role, serine/threonine-protein kinase, which plays a role in regulating allophagy, an autophagic process in which paternal organelles, including mitochondria and membranous organelles, are degraded in embryos. Phosphorylates the allophagy receptor allo-1, which is required for allophagy. The chain is Inhibitor of nuclear factor kappa-B kinase epsilon subunit homolog 1 from Caenorhabditis elegans.